The chain runs to 382 residues: MNCEREQLRGNQEAAAAPDTMAQPYASAQFAPPQNGIPAEYTAPHPHPAPEYTGQTTVPEHTLNLYPPAQTHSEQSPADTSAQTVSGTATQTDDAAPTDGQPQTQPSENTENKSQPKRLHVSNIPFRFRDPDLRQMFGQFGKILDVEIIFNERGSKGFGFVTFENSADADRAREKLHGTVVEGRKIEVNNATARVMTNKKTVNPYTNGWKLNPVVGAVYSPEFYAGTVLLCQANQEGSSMYSAPSSLVYTSAMPGFPYPAATAAAAYRGAHLRGRGRTVYNTFRAAAPPPPIPAYGGVVYQDGFYGADIYGGYAAYRYAQPTPATAAAYSDSYGRVYAADPYHHALAPAPTYGVGAMPQGSSPSTDFRGAKLHTSRPLLSGS.

Residues 1–121 (MNCEREQLRG…NKSQPKRLHV (121 aa)) are disordered. The span at 70 to 87 (QTHSEQSPADTSAQTVSG) shows a compositional bias: polar residues. Low complexity predominate over residues 88 to 99 (TATQTDDAAPTD). Over residues 100–113 (GQPQTQPSENTENK) the composition is skewed to polar residues. Residues 117–193 (KRLHVSNIPF…RKIEVNNATA (77 aa)) enclose the RRM domain. Arg-317 bears the Asymmetric dimethylarginine mark. Residues 357–382 (MPQGSSPSTDFRGAKLHTSRPLLSGS) are disordered.

In terms of assembly, binds to the C-terminus of ATXN2.

Its subcellular location is the nucleus. The protein localises to the cytoplasm. Functionally, RNA-binding protein that regulates alternative splicing events by binding to 5'-UGCAUGU-3' elements. Prevents binding of U2AF2 to the 3'-splice site. Regulates alternative splicing of tissue-specific exons and of differentially spliced exons during erythropoiesis. This Pongo abelii (Sumatran orangutan) protein is RNA binding protein fox-1 homolog 1 (RBFOX1).